A 115-amino-acid chain; its full sequence is Large ribosomal subunit protein uL22 (115 aa).

This sequence belongs to the universal ribosomal protein uL22 family. Part of the 50S ribosomal subunit.

This protein binds specifically to 23S rRNA; its binding is stimulated by other ribosomal proteins, e.g. L4, L17, and L20. It is important during the early stages of 50S assembly. It makes multiple contacts with different domains of the 23S rRNA in the assembled 50S subunit and ribosome. Its function is as follows. The globular domain of the protein is located near the polypeptide exit tunnel on the outside of the subunit, while an extended beta-hairpin is found that lines the wall of the exit tunnel in the center of the 70S ribosome. In Enterococcus faecalis (strain ATCC 700802 / V583), this protein is Large ribosomal subunit protein uL22.